The chain runs to 343 residues: F17g-G fimbrial adhesin (343 aa).

Residues 1-22 (MTNFYKVCLAVFILVCCNISHA) form the signal peptide. The interval 23–199 (AVSFIGSTEN…LNPFTLNDTV (177 aa)) is receptor-binding lectin domain. A carbohydrate-binding positions include 65–66 (AN), 110–111 (DT), and 138–141 (STQG). A disulfide bridge connects residues Cys-75 and Cys-132. Residues 200 to 343 (TSCRLLTPSA…GISTFTFSYQ (144 aa)) are fimbrillin-binding domain. Residues 287–307 (LKFGPDSPVKGNENQWQLSTG) are disordered. Over residues 298–307 (NENQWQLSTG) the composition is skewed to polar residues.

Belongs to the fimbrial protein family.

It localises to the fimbrium. Essential fimbrial adhesion factor that mediates binding to N-acetylglucosamine-containing receptors in the host intestinal microvilli, leading to colonization of the intestinal tissue, and diarrhea or septicemia. Also confers adhesiveness to laminin and basement membranes. May be involved in the initiation of polymerization of fimbrillin monomers during fimbrial filament biogenesis. The sequence is that of F17g-G fimbrial adhesin (f17gG) from Escherichia coli.